A 475-amino-acid polypeptide reads, in one-letter code: Putative F-box protein At3g58960 (475 aa).

The F-box domain maps to 1–49; sequence MDRISSLSNDIISNIVSFLSAKDAAVASVLSKRWQNIYTIVPNLEFDNT.

This chain is Putative F-box protein At3g58960, found in Arabidopsis thaliana (Mouse-ear cress).